Consider the following 438-residue polypeptide: MDYQTIPSQGLSGEICVPGDKSISHRAVLLAAIAEGQTQVDGFLMGADNLAMVSALQQMGASIQVIEDENILVVEGVGMTGLQAPPEALDCGNSGTAIRLLSGLLAGQPFNTVLTGDSSLQRRPMKRIIDPLTLMGAKIDSTGNVPPLKIYGNPRLTGIHYQLPMASAQVKSCLLLAGLYARGKTCITEPAPSRDHTERLLKHFHYTLQKDKQSICVSGGGKLKANDISIPGDISSAAFFIVAATITPGSAIRLCRVGVNPTRLGVINLLKMMGADIEVTHYTEKNEEPTADITVRHARLKGIDIPPDQVPLTIDEFPVLLIAAAVAQGKTVLRDAAELRVKETDRIAAMVDGLQKLGIAAESLPDGVIIQGGTLEGGEVNSYDDHRIAMAFAVAGTLAKGPVRIRNCDNVKTSFPNFVELANEVGMNVKGVRGRGGF.

Position 21 (Lys21) interacts with phosphoenolpyruvate. Positions 22 and 26 each coordinate 3-phosphoshikimate. Residues 93 to 96 are phosphoenolpyruvate; it reads NSGT. 3 residues coordinate phosphoenolpyruvate: Gly95, Thr96, and Arg123. 3-phosphoshikimate is bound by residues Ser167, Ala168, Gln169, Asp315, and Lys342. Position 169 (Gln169) interacts with phosphoenolpyruvate. Asp315 (proton acceptor) is an active-site residue. Residues Arg346 and Arg387 each coordinate phosphoenolpyruvate.

Belongs to the EPSP synthase family. Homodimer or homotetramer.

The protein resides in the cytoplasm. It carries out the reaction 3-phosphoshikimate + phosphoenolpyruvate = 5-O-(1-carboxyvinyl)-3-phosphoshikimate + phosphate. It participates in metabolic intermediate biosynthesis; chorismate biosynthesis; chorismate from D-erythrose 4-phosphate and phosphoenolpyruvate: step 6/7. In terms of biological role, catalyzes the transfer of the enolpyruvyl moiety of phosphoenolpyruvate (PEP) to the 5-hydroxyl of shikimate-3-phosphate (S3P) to produce enolpyruvyl shikimate-3-phosphate and inorganic phosphate. The sequence is that of 3-phosphoshikimate 1-carboxyvinyltransferase from Coxiella burnetii (strain RSA 493 / Nine Mile phase I).